The chain runs to 290 residues: 2-dehydropantoate 2-reductase (290 aa).

Residues 8–13, Asn-98, and Ala-124 contribute to the NADP(+) site; that span reads GPGAVG. Asn-98 is a binding site for substrate. Lys-175 acts as the Proton donor in catalysis. Substrate is bound by residues Asn-179 and Ser-244. Glu-256 contributes to the NADP(+) binding site.

Belongs to the ketopantoate reductase family.

The protein localises to the cytoplasm. The enzyme catalyses (R)-pantoate + NADP(+) = 2-dehydropantoate + NADPH + H(+). It functions in the pathway cofactor biosynthesis; (R)-pantothenate biosynthesis; (R)-pantoate from 3-methyl-2-oxobutanoate: step 2/2. Its function is as follows. Catalyzes the NADPH-dependent reduction of ketopantoate into pantoic acid. This is 2-dehydropantoate 2-reductase from Caulobacter vibrioides (strain ATCC 19089 / CIP 103742 / CB 15) (Caulobacter crescentus).